A 474-amino-acid chain; its full sequence is MQLSSYTELREQLLAGSLRCEEVVRSYLERIDAAREDNIFITVFHERALERARMLDRKLAEGGTVGKLFGLPMAIKDNIAMKGERLTCASKILENYESVFDATVILRLEAEDAIFLGKTNMDEFAMGSSNENSAFGNVPNPFDKSRVPGGSSGGSAAAVAANLALVALGSDTGGSVRQPAGFCDIVGLKPTYGRISRFGLVAFASSFDQIGVLARTCGDAALVLEVMAGKDERDATSSAHQVDSYHSMMERVSPEGLKIGVPQEFFTDALNADVARLVLATLDDLRNRGAELVDITLPDSAYAIAAYYILVTAEASSNLARFDGARYGFRTSEAADLAAMYVNSRTEGFGREVKRRIMLGTYVLSAGYYDTYYKKAQQVRRYFQDQYRAALQHVDVIAGPTSPFPPFGLGDKTGDPLEMYLADVFTVPASIVGMPAVSVPLGFDSQKLPVGMHLVGNFFEEGKLLGIARMMQRA.

Active-site charge relay system residues include lysine 76 and serine 151. Residue serine 175 is the Acyl-ester intermediate of the active site.

It belongs to the amidase family. GatA subfamily. Heterotrimer of A, B and C subunits.

The enzyme catalyses L-glutamyl-tRNA(Gln) + L-glutamine + ATP + H2O = L-glutaminyl-tRNA(Gln) + L-glutamate + ADP + phosphate + H(+). Its function is as follows. Allows the formation of correctly charged Gln-tRNA(Gln) through the transamidation of misacylated Glu-tRNA(Gln) in organisms which lack glutaminyl-tRNA synthetase. The reaction takes place in the presence of glutamine and ATP through an activated gamma-phospho-Glu-tRNA(Gln). The sequence is that of Glutamyl-tRNA(Gln) amidotransferase subunit A from Chlorobium chlorochromatii (strain CaD3).